The following is a 212-amino-acid chain: MRLVLASNNAKKLKELGTLLAPAGVELVTQGSLGIAEAEEPHHTFIENALAKARHAAAASGLPAIADDSGLCVDALGGQPGVQSAHYATLDPADIDGLAREALRERQDAANNRRLLSALDGQANRRARFVCTLVAIRSADDPEPLVALGRWEGELLTGLRGSGGFGYDPLLSIPALDATVAQLDAETKNRHSHRALAAEQMVALMRSAWHLA.

7-12 (SNNAKK) contributes to the substrate binding site. Residues Glu39 and Asp68 each contribute to the Mg(2+) site. Asp68 acts as the Proton acceptor in catalysis. Residues Ser69, 165 to 168 (FGYD), Lys188, and 193 to 194 (HR) contribute to the substrate site.

It belongs to the HAM1 NTPase family. As to quaternary structure, homodimer. The cofactor is Mg(2+).

The enzyme catalyses XTP + H2O = XMP + diphosphate + H(+). The catalysed reaction is dITP + H2O = dIMP + diphosphate + H(+). It catalyses the reaction ITP + H2O = IMP + diphosphate + H(+). In terms of biological role, pyrophosphatase that catalyzes the hydrolysis of nucleoside triphosphates to their monophosphate derivatives, with a high preference for the non-canonical purine nucleotides XTP (xanthosine triphosphate), dITP (deoxyinosine triphosphate) and ITP. Seems to function as a house-cleaning enzyme that removes non-canonical purine nucleotides from the nucleotide pool, thus preventing their incorporation into DNA/RNA and avoiding chromosomal lesions. This is dITP/XTP pyrophosphatase from Leptothrix cholodnii (strain ATCC 51168 / LMG 8142 / SP-6) (Leptothrix discophora (strain SP-6)).